A 189-amino-acid chain; its full sequence is UPF0301 protein CF0373 (189 aa).

The protein belongs to the UPF0301 (AlgH) family.

The polypeptide is UPF0301 protein CF0373 (Chlamydia felis (strain Fe/C-56) (Chlamydophila felis)).